The primary structure comprises 931 residues: GPI ethanolamine phosphate transferase 1 (931 aa).

Residue M1 is a topological domain, cytoplasmic. The helical transmembrane segment at 2 to 22 threads the bilayer; sequence LLFFALGLLIHFVFFASIFDI. Topologically, residues 23–442 are lumenal; the sequence is YFTSPLVHGM…SYYHTYDRLF (420 aa). N128, N192, N295, and N350 each carry an N-linked (GlcNAc...) asparagine glycan. Residues 443–463 form a helical membrane-spanning segment; sequence LGINVAVGFVGWMSYTSLLII. Residues 464–480 lie on the Cytoplasmic side of the membrane; the sequence is KSHSNIPKGTRKEGKKP. A helical membrane pass occupies residues 481–501; it reads HCLLLYSFIATGVLVACFLMI. A topological domain (lumenal) is located at residue Q502. The helical transmembrane segment at 503-523 threads the bilayer; sequence ACPWTYYVYCLLPVPIWYAVL. Topologically, residues 524-543 are cytoplasmic; it reads REHEVIQDLVESLLTFPRSH. Residues 544 to 564 traverse the membrane as a helical segment; sequence FVAYLLVFTLGIEVLVLSFFY. A topological domain (lumenal) is located at residue R565. A helical transmembrane segment spans residues 566-586; the sequence is YMLTAGLIVFAGWPFLTQLWT. At 587 to 591 the chain is on the cytoplasmic side; it reads RAKIT. The helical transmembrane segment at 592 to 612 threads the bilayer; the sequence is FLSWAFFSLLLAVFPLMPVVG. Residues 613–618 are Lumenal-facing; it reads RKPNLS. The N-linked (GlcNAc...) asparagine glycan is linked to N616. Residues 619–639 form a helical membrane-spanning segment; sequence LVMGAGFLVLLLSLAVVTTLG. The Cytoplasmic portion of the chain corresponds to 640–649; sequence KRNIKLVKGE. The helical transmembrane segment at 650-670 threads the bilayer; that stretch reads LLVLLLQMLSTVLSMYVVYST. Topologically, residues 671–685 are lumenal; sequence HHSLLKKEGLPLMNQ. A helical membrane pass occupies residues 686-706; it reads IVSWATLASSLVAPLLSSTAL. Topologically, residues 707-723 are cytoplasmic; the sequence is SQRLASILLSLMSTYLL. A helical membrane pass occupies residues 724-744; the sequence is LSTGYEALFPLVLSCLMFVWI. Residues 745-786 lie on the Lumenal side of the membrane; that stretch reads QVEQETLQQPGVSCKQKLTSIQFTCDTDIAQFRQLCPDDIRR. The helical transmembrane segment at 787 to 807 threads the bilayer; that stretch reads AFFLVFFLLTAFFGTGNIASI. The Cytoplasmic segment spans residues 808–824; sequence NSFDLASVYCFLTVFSP. A helical transmembrane segment spans residues 825–845; sequence FMMGALMMWKILIPFVLVMCA. Over 846–858 the chain is Lumenal; the sequence is FEAVQITTQLSSK. A helical transmembrane segment spans residues 859-879; that stretch reads GLFLVVLIISDIMALHFFFLV. At 880-894 the chain is on the cytoplasmic side; it reads KDSGSWLDIGTSISH. A helical membrane pass occupies residues 895–915; it reads YVIVMSMTIFLVFLNGLAQLL. Residues 916–931 lie on the Lumenal side of the membrane; the sequence is TTKKLQLCGKPKSHLM.

It belongs to the PIGG/PIGN/PIGO family. PIGN subfamily.

Its subcellular location is the endoplasmic reticulum membrane. The protein operates within glycolipid biosynthesis; glycosylphosphatidylinositol-anchor biosynthesis. Functionally, ethanolamine phosphate transferase that catalyzes an ethanolamine phosphate (EtNP) transfer from phosphatidylethanolamine (PE) to the 2-OH position of the first alpha-1,4-linked mannose of the alpha-D-Man-(1-&gt;6)-alpha-D-Man-(1-&gt;4)-alpha-D-GlcN-(1-&gt;6)-(1-radyl,2-acyl-sn-glycero-3-phospho)-2-acyl-inositol (also termed H3) intermediate to generate an alpha-D-Man-(1-&gt;6)-2-PEtn-alpha-D-Man-(1-&gt;4)-alpha-D-GlcN-(1-&gt;6)-(1-radyl,2-acyl-sn-glycero-3-phospho)-2-acyl-inositol and participates in the eighth step of the glycosylphosphatidylinositol-anchor biosynthesis. May act as suppressor of replication stress and chromosome missegregation. The sequence is that of GPI ethanolamine phosphate transferase 1 from Mus musculus (Mouse).